The sequence spans 226 residues: Regulator of microtubule dynamics protein 1 (226 aa).

The protein belongs to the FAM82/RMD family. In terms of assembly, interacts with air-2.

Its subcellular location is the cytoplasm. It localises to the cytoskeleton. The protein localises to the spindle pole. Functionally, acts in chromosome segregation and organization during mitosis. In Caenorhabditis elegans, this protein is Regulator of microtubule dynamics protein 1 (rmd-1).